Consider the following 278-residue polypeptide: HTH-type transcriptional activator RhaS (278 aa).

An HTH araC/xylS-type domain is found at 174–272; that stretch reads NLLLAWLEDH…NWSPRDIRQG (99 aa). 2 DNA-binding regions (H-T-H motif) span residues 191-212 and 239-262; these read DAVA…KQQT and VTDI…RREF.

As to quaternary structure, binds DNA as a dimer.

It is found in the cytoplasm. Activates expression of the rhaBAD and rhaT operons. The chain is HTH-type transcriptional activator RhaS from Escherichia coli O127:H6 (strain E2348/69 / EPEC).